A 264-amino-acid polypeptide reads, in one-letter code: Thymidylate synthase (264 aa).

Residue Arg21 participates in dUMP binding. His51 provides a ligand contact to (6R)-5,10-methylene-5,6,7,8-tetrahydrofolate. DUMP is bound at residue 126-127 (RR). Residue Cys146 is the Nucleophile of the active site. DUMP-binding positions include 166–169 (RSAD), Asn177, and 207–209 (HLY). Asp169 is a binding site for (6R)-5,10-methylene-5,6,7,8-tetrahydrofolate. Position 263 (Ala263) interacts with (6R)-5,10-methylene-5,6,7,8-tetrahydrofolate.

The protein belongs to the thymidylate synthase family. Bacterial-type ThyA subfamily. As to quaternary structure, homodimer.

The protein localises to the cytoplasm. The catalysed reaction is dUMP + (6R)-5,10-methylene-5,6,7,8-tetrahydrofolate = 7,8-dihydrofolate + dTMP. Its pathway is pyrimidine metabolism; dTTP biosynthesis. In terms of biological role, catalyzes the reductive methylation of 2'-deoxyuridine-5'-monophosphate (dUMP) to 2'-deoxythymidine-5'-monophosphate (dTMP) while utilizing 5,10-methylenetetrahydrofolate (mTHF) as the methyl donor and reductant in the reaction, yielding dihydrofolate (DHF) as a by-product. This enzymatic reaction provides an intracellular de novo source of dTMP, an essential precursor for DNA biosynthesis. The sequence is that of Thymidylate synthase from Rhodopirellula baltica (strain DSM 10527 / NCIMB 13988 / SH1).